The chain runs to 91 residues: UPF0358 protein SSP1677 (91 aa).

Belongs to the UPF0358 family.

This chain is UPF0358 protein SSP1677, found in Staphylococcus saprophyticus subsp. saprophyticus (strain ATCC 15305 / DSM 20229 / NCIMB 8711 / NCTC 7292 / S-41).